We begin with the raw amino-acid sequence, 127 residues long: Holo-[acyl-carrier-protein] synthase (127 aa).

Mg(2+)-binding residues include D9 and E58.

This sequence belongs to the P-Pant transferase superfamily. AcpS family. The cofactor is Mg(2+).

The protein localises to the cytoplasm. It catalyses the reaction apo-[ACP] + CoA = holo-[ACP] + adenosine 3',5'-bisphosphate + H(+). Its function is as follows. Transfers the 4'-phosphopantetheine moiety from coenzyme A to a Ser of acyl-carrier-protein. This chain is Holo-[acyl-carrier-protein] synthase, found in Shewanella baltica (strain OS195).